A 206-amino-acid chain; its full sequence is 2-oxoglutarate-dependent dioxygenase iboH (206 aa).

Residues Pro-51 to Pro-157 enclose the Fe2OG dioxygenase domain. His-75, Asp-77, and His-134 together coordinate Fe cation. Arg-148 contributes to the 2-oxoglutarate binding site.

It belongs to the iron/ascorbate-dependent oxidoreductase family. It depends on Fe(2+) as a cofactor.

It catalyses the reaction L-glutamate + 2-oxoglutarate + O2 = (3R)-3-hydroxy-L-glutamate + succinate + CO2. It functions in the pathway secondary metabolite biosynthesis. In terms of biological role, 2-oxoglutarate-dependent dioxygenase; part of the gene cluster that mediates the biosynthesis of the psychoactive metabolites ibotenic acid and muscimol. The first committed step is glutamate hydroxylation by the 2-oxoglutarate-dependent dioxygenase iboH, and the last step is decarboxylation of ibotenic acid to muscimol by the decarboxylase iboD. The order of the intermediate reactions is somewhat ambiguous. IboA likely activates the carboxylic acid at position 5 to introduce an amide bond, and the flavin monooxygenase iboF generates the N-O bond. There are several options for the latter step. One option is that iboF directly hydroxylates the amide nitrogen formed by iboA to produce a hydroxamic acid species. Another option is that iboF hydroxylates an external N-containing compound, whose resulting N-O bond is subsequently introduced into the hydroxyglutamate scaffold. The paralogous PLP-dependent cystathionine gamma-synthase-like enzymes iboG1 and iboG2 are likely involved in substitution of the OH group at position 3 by the O-N moiety. The first cyclic intermediate is most probably tricholomic acid which is likely desaturated to ibotenic acid by the cytochrome P450 monooxygenase iboC. This is 2-oxoglutarate-dependent dioxygenase iboH from Amanita muscaria (strain Koide BX008).